Reading from the N-terminus, the 645-residue chain is 1,4-alpha-glucan branching enzyme GlgB (645 aa).

The active-site Nucleophile is D309. Residue E352 is the Proton donor of the active site. A disordered region spans residues 619 to 645 (VKTRKGSKKQDGSKTKVRSNVTSRGKR). Polar residues predominate over residues 636 to 645 (RSNVTSRGKR).

This sequence belongs to the glycosyl hydrolase 13 family. GlgB subfamily. Monomer.

The enzyme catalyses Transfers a segment of a (1-&gt;4)-alpha-D-glucan chain to a primary hydroxy group in a similar glucan chain.. The protein operates within glycan biosynthesis; glycogen biosynthesis. Catalyzes the formation of the alpha-1,6-glucosidic linkages in glycogen by scission of a 1,4-alpha-linked oligosaccharide from growing alpha-1,4-glucan chains and the subsequent attachment of the oligosaccharide to the alpha-1,6 position. This chain is 1,4-alpha-glucan branching enzyme GlgB, found in Bacillus cereus (strain G9842).